The primary structure comprises 252 residues: Isoprenyl transferase (252 aa).

The active site involves Asp-32. Asp-32 serves as a coordination point for Mg(2+). Substrate is bound by residues 33–36 (GNGR), Trp-37, Arg-45, His-49, and 77–79 (STE). The active-site Proton acceptor is the Asn-80. Residues Trp-81, Arg-83, Arg-200, and 206–208 (RLS) contribute to the substrate site. Glu-219 provides a ligand contact to Mg(2+).

It belongs to the UPP synthase family. Homodimer. The cofactor is Mg(2+).

Functionally, catalyzes the condensation of isopentenyl diphosphate (IPP) with allylic pyrophosphates generating different type of terpenoids. The sequence is that of Isoprenyl transferase from Oceanobacillus iheyensis (strain DSM 14371 / CIP 107618 / JCM 11309 / KCTC 3954 / HTE831).